A 476-amino-acid polypeptide reads, in one-letter code: 3-isopropylmalate dehydratase large subunit (476 aa).

[4Fe-4S] cluster is bound by residues C347, C407, and C410. The tract at residues 418–442 is disordered; sequence LAPGERSASTSNRNFEGRQGKGGRT.

This sequence belongs to the aconitase/IPM isomerase family. LeuC type 1 subfamily. In terms of assembly, heterodimer of LeuC and LeuD. Requires [4Fe-4S] cluster as cofactor.

It catalyses the reaction (2R,3S)-3-isopropylmalate = (2S)-2-isopropylmalate. It functions in the pathway amino-acid biosynthesis; L-leucine biosynthesis; L-leucine from 3-methyl-2-oxobutanoate: step 2/4. In terms of biological role, catalyzes the isomerization between 2-isopropylmalate and 3-isopropylmalate, via the formation of 2-isopropylmaleate. The polypeptide is 3-isopropylmalate dehydratase large subunit (Streptomyces coelicolor (strain ATCC BAA-471 / A3(2) / M145)).